Consider the following 356-residue polypeptide: UDP-N-acetylglucosamine--N-acetylmuramyl-(pentapeptide) pyrophosphoryl-undecaprenol N-acetylglucosamine transferase (356 aa).

Residues 15–17 (TGG), N127, R163, S191, I244, 263–268 (ALTVSE), and Q288 contribute to the UDP-N-acetyl-alpha-D-glucosamine site.

The protein belongs to the glycosyltransferase 28 family. MurG subfamily.

It localises to the cell inner membrane. It carries out the reaction di-trans,octa-cis-undecaprenyl diphospho-N-acetyl-alpha-D-muramoyl-L-alanyl-D-glutamyl-meso-2,6-diaminopimeloyl-D-alanyl-D-alanine + UDP-N-acetyl-alpha-D-glucosamine = di-trans,octa-cis-undecaprenyl diphospho-[N-acetyl-alpha-D-glucosaminyl-(1-&gt;4)]-N-acetyl-alpha-D-muramoyl-L-alanyl-D-glutamyl-meso-2,6-diaminopimeloyl-D-alanyl-D-alanine + UDP + H(+). It participates in cell wall biogenesis; peptidoglycan biosynthesis. Its function is as follows. Cell wall formation. Catalyzes the transfer of a GlcNAc subunit on undecaprenyl-pyrophosphoryl-MurNAc-pentapeptide (lipid intermediate I) to form undecaprenyl-pyrophosphoryl-MurNAc-(pentapeptide)GlcNAc (lipid intermediate II). The sequence is that of UDP-N-acetylglucosamine--N-acetylmuramyl-(pentapeptide) pyrophosphoryl-undecaprenol N-acetylglucosamine transferase from Yersinia pestis (strain Pestoides F).